Reading from the N-terminus, the 506-residue chain is NAD(P)H-quinone oxidoreductase subunit 2 (506 aa).

Transmembrane regions (helical) follow at residues 14 to 34 (AIIP…VDLA), 42 to 62 (WAPI…ALQW), 79 to 99 (LAIS…LISW), 108 to 128 (PIGE…LLCG), 132 to 152 (LISV…LSGY), 167 to 187 (LLVG…LYGL), 206 to 226 (FITS…IAAV), 240 to 260 (PTPV…AFAI), 276 to 296 (LLFT…ALAQ), 302 to 322 (MLAY…VSGT), 330 to 350 (VLYL…VILF), 374 to 394 (LGLS…GFFG), and 409 to 429 (LLVI…ISVI).

It belongs to the complex I subunit 2 family. In terms of assembly, NDH-1 can be composed of about 15 different subunits; different subcomplexes with different compositions have been identified which probably have different functions.

Its subcellular location is the cellular thylakoid membrane. It catalyses the reaction a plastoquinone + NADH + (n+1) H(+)(in) = a plastoquinol + NAD(+) + n H(+)(out). The catalysed reaction is a plastoquinone + NADPH + (n+1) H(+)(in) = a plastoquinol + NADP(+) + n H(+)(out). Its function is as follows. NDH-1 shuttles electrons from an unknown electron donor, via FMN and iron-sulfur (Fe-S) centers, to quinones in the respiratory and/or the photosynthetic chain. The immediate electron acceptor for the enzyme in this species is believed to be plastoquinone. Couples the redox reaction to proton translocation, and thus conserves the redox energy in a proton gradient. Cyanobacterial NDH-1 also plays a role in inorganic carbon-concentration. This is NAD(P)H-quinone oxidoreductase subunit 2 from Prochlorococcus marinus (strain MIT 9215).